The chain runs to 64 residues: Large ribosomal subunit protein bL35 (64 aa).

The protein belongs to the bacterial ribosomal protein bL35 family.

The protein is Large ribosomal subunit protein bL35 of Chlorobium chlorochromatii (strain CaD3).